The primary structure comprises 585 residues: Chaperonin GroEL, chloroplastic (585 aa).

ATP is bound by residues 55 to 58 (TLGP), 113 to 117 (DGTTT), G442, 507 to 509 (NAA), and D523.

Belongs to the chaperonin (HSP60) family. Forms a cylinder of 14 subunits composed of two heptameric rings stacked back-to-back. Interacts with the co-chaperonin GroES.

It localises to the plastid. It is found in the chloroplast. The enzyme catalyses ATP + H2O + a folded polypeptide = ADP + phosphate + an unfolded polypeptide.. Together with its co-chaperonin GroES, plays an essential role in assisting protein folding. The GroEL-GroES system forms a nano-cage that allows encapsulation of the non-native substrate proteins and provides a physical environment optimized to promote and accelerate protein folding. The chain is Chaperonin GroEL, chloroplastic from Pyrenomonas salina.